The chain runs to 505 residues: Monocarboxylate transporter 6 (505 aa).

The Cytoplasmic segment spans residues 1–17 (MPQALERADGSWAWVVL). Residues 18–38 (LATMVTQGLTLGFPTCIGIFF) traverse the membrane as a helical segment. Residues 39 to 53 (TELQWEFQASNSETS) are Extracellular-facing. The chain crosses the membrane as a helical span at residues 54-74 (WFPSILTAVLHMAGPLCSILV). Over 75–80 (GRFGCR) the chain is Cytoplasmic. The helical transmembrane segment at 81 to 101 (VTVMLGGVLASLGMVASSFSH) threads the bilayer. At 102 to 110 (NLSQLYFTA) the chain is on the extracellular side. The chain crosses the membrane as a helical span at residues 111–131 (GFITGLGMCFSFQSSITVLGF). Over 132-137 (YFVRRR) the chain is Cytoplasmic. A helical membrane pass occupies residues 138-158 (VLANALASMGVSLGITLWPLL). Over 159–171 (SRYLLENLGWRGT) the chain is Extracellular. Residues 172–192 (FLVFGGIFLHCCICGAIIRPV) form a helical membrane-spanning segment. Residues 193-239 (ATSVAPETKECPPPPPETPALGCLAACGRTIQRHLAFDILRHNTGYC) are Cytoplasmic-facing. Residues 240–260 (VYILGVMWSVLGFPLPQVFLV) form a helical membrane-spanning segment. At 261 to 274 (PYAMWHSVDEQQAA) the chain is on the extracellular side. Residues 275 to 295 (LLISIIGFSNIFLRPLAGLMA) traverse the membrane as a helical segment. Residues 296–305 (GRPAFASHRK) are Cytoplasmic-facing. A helical membrane pass occupies residues 306-326 (YLFSLALLLNGLTNLVCAASG). Residues 327 to 329 (DFW) are Extracellular-facing. A helical transmembrane segment spans residues 330-350 (VLVGYCLAYSVSMSGIGALIF). Residues 351–367 (QVLMDIVPMDQFPRALG) lie on the Cytoplasmic side of the membrane. A helical membrane pass occupies residues 368 to 388 (LFTVLDGLAFLISPPLAGLLL). Residues 389 to 396 (DATNNFSY) lie on the Extracellular side of the membrane. A helical membrane pass occupies residues 397–417 (VFYMSSFFLISAALFMGGSFY). The Cytoplasmic segment spans residues 418–505 (ALQKKEQGKQ…QTALGWNSPT (88 aa)). A disordered region spans residues 443 to 464 (KDGPGKQRSPEIMCQSSRQPRP).

It belongs to the major facilitator superfamily. Monocarboxylate porter (TC 2.A.1.13) family. As to expression, highly expressed in kidney.

It is found in the cell membrane. Its function is as follows. Proton-linked monocarboxylate transporter. Catalyzes the rapid transport across the plasma membrane of many monocarboxylates such as lactate, pyruvate, branched-chain oxo acids derived from leucine, valine and isoleucine, and the ketone bodies acetoacetate, beta-hydroxybutyrate and acetate. This chain is Monocarboxylate transporter 6 (SLC16A5), found in Homo sapiens (Human).